Reading from the N-terminus, the 337-residue chain is P2Y purinoceptor 14 (337 aa).

The Extracellular portion of the chain corresponds to 1-28 (MNATSVPPAEGSCPSNALITKQIIPMLY). A glycan (N-linked (GlcNAc...) asparagine) is linked at Asn-2. The chain crosses the membrane as a helical span at residues 29–49 (FVVFVAGILLNGMSGWVFFYV). Residues 50–54 (PSSKS) are Cytoplasmic-facing. A helical membrane pass occupies residues 55–75 (FIVYLKNIVIADFLMSLTFPF). Over 76–95 (KILGDLGLGLWQVKVFVCRV) the chain is Extracellular. Residues Cys-93 and Cys-171 are joined by a disulfide bond. A helical transmembrane segment spans residues 96–116 (SAVLFYINMYVSIVFFGLIGF). Residues 117 to 138 (DRYYKIVKPLLTSFIQSISYSK) lie on the Cytoplasmic side of the membrane. The helical transmembrane segment at 139-159 (LLSVLVWSLTLLIALPNMILT) threads the bilayer. The Extracellular segment spans residues 160-187 (NRNVTEATRVKCMDLKSDLGLKWHKASS). Asn-162 is a glycosylation site (N-linked (GlcNAc...) asparagine). A helical membrane pass occupies residues 188-208 (YIFVGIFWIVFLSLIIFYTAI). Over 209–233 (TKKIFKSHFKSRKNSVSVKKKSSRN) the chain is Cytoplasmic. The helical transmembrane segment at 234 to 254 (IFSIMFVFFICFVPYHIARIP) threads the bilayer. Topologically, residues 255-277 (YTQSQTEAHYSCQSKQILFYVKE) are extracellular. Residues 278–298 (FSLLLSAANVCLDPIIYFFLC) form a helical membrane-spanning segment. Residues 299–337 (QPFREVLCKKLHIQLKTQHDSETSKIKRENIIQESTDTL) lie on the Cytoplasmic side of the membrane.

The protein belongs to the G-protein coupled receptor 1 family.

It localises to the cell membrane. In terms of biological role, receptor for UDP-glucose and other UDP-sugar coupled to G-proteins. Not activated by ATP, ADP, UTP or ATP. The sequence is that of P2Y purinoceptor 14 (P2RY14) from Bos taurus (Bovine).